We begin with the raw amino-acid sequence, 774 residues long: Ent-beyerene synthase KSL4, chloroplastic (774 aa).

A chloroplast-targeting transit peptide spans methionine 1–valine 35. Positions 525, 529, 668, 669, 672, and 676 each coordinate Mg(2+). Residues aspartate 525–aspartate 529 carry the DDXXD motif motif.

This sequence belongs to the terpene synthase family. It depends on Mg(2+) as a cofactor.

It localises to the plastid. Its subcellular location is the chloroplast. The catalysed reaction is ent-copalyl diphosphate = ent-beyerene + diphosphate. It carries out the reaction ent-copalyl diphosphate = ent-atiserene + diphosphate. It catalyses the reaction ent-copalyl diphosphate = ent-kaur-16-ene + diphosphate. It functions in the pathway secondary metabolite biosynthesis; terpenoid biosynthesis. Diterpene cyclase involved in the biosynthesis of labdane-related diterpenoids (LRDs) natural products. Catalyzes the cyclization of ent-CDP into ent-beyerene as a major and ent-kaurene and ent-atiserene as minor products. The chain is Ent-beyerene synthase KSL4, chloroplastic from Ricinus communis (Castor bean).